The following is a 232-amino-acid chain: Ubiquinone biosynthesis O-methyltransferase (232 aa).

The S-adenosyl-L-methionine site is built by arginine 36, glycine 55, aspartate 76, and methionine 120.

It belongs to the methyltransferase superfamily. UbiG/COQ3 family.

It catalyses the reaction a 3-demethylubiquinol + S-adenosyl-L-methionine = a ubiquinol + S-adenosyl-L-homocysteine + H(+). It carries out the reaction a 3-(all-trans-polyprenyl)benzene-1,2-diol + S-adenosyl-L-methionine = a 2-methoxy-6-(all-trans-polyprenyl)phenol + S-adenosyl-L-homocysteine + H(+). Its pathway is cofactor biosynthesis; ubiquinone biosynthesis. O-methyltransferase that catalyzes the 2 O-methylation steps in the ubiquinone biosynthetic pathway. This Burkholderia lata (strain ATCC 17760 / DSM 23089 / LMG 22485 / NCIMB 9086 / R18194 / 383) protein is Ubiquinone biosynthesis O-methyltransferase.